A 1116-amino-acid chain; its full sequence is uncharacterized protein (1116 aa).

Residues 3 to 20 traverse the membrane as a helical segment; it reads FFLTFLLFLFTLFSLFVY.

The protein localises to the membrane. This is an uncharacterized protein from Aquifex aeolicus (strain VF5).